We begin with the raw amino-acid sequence, 661 residues long: Heme transporter BhuA (661 aa).

Residues 1–23 form the signal peptide; the sequence is MKFTRTLVLASTFLLATVATSQA. Residues 48 to 159 enclose the TBDR plug domain; sequence KDNIEATGGT…AAGAIRYETV (112 aa). The 492-residue stretch at 170 to 661 folds into the TBDR beta-barrel domain; it reads TFGARIIGSY…TFTFQTAFKF (492 aa).

This sequence belongs to the TonB-dependent receptor family.

The protein resides in the cell outer membrane. Heme transporter. The chain is Heme transporter BhuA (bhuA) from Brucella suis biovar 1 (strain 1330).